The sequence spans 205 residues: Small ribosomal subunit protein uS4 (205 aa).

An S4 RNA-binding domain is found at 94-157; sequence SRLDTVVYRM…QQIPLIQESI (64 aa).

It belongs to the universal ribosomal protein uS4 family. Part of the 30S ribosomal subunit. Contacts protein S5. The interaction surface between S4 and S5 is involved in control of translational fidelity.

In terms of biological role, one of the primary rRNA binding proteins, it binds directly to 16S rRNA where it nucleates assembly of the body of the 30S subunit. Its function is as follows. With S5 and S12 plays an important role in translational accuracy. The polypeptide is Small ribosomal subunit protein uS4 (Rickettsia prowazekii (strain Madrid E)).